Here is a 188-residue protein sequence, read N- to C-terminus: Xanthine phosphoribosyltransferase (188 aa).

Xanthine is bound by residues L20 and N27. 127 to 131 is a binding site for 5-phospho-alpha-D-ribose 1-diphosphate; sequence AHGEA. Residue K155 participates in xanthine binding.

It belongs to the purine/pyrimidine phosphoribosyltransferase family. Xpt subfamily. As to quaternary structure, homodimer.

The protein resides in the cytoplasm. The catalysed reaction is XMP + diphosphate = xanthine + 5-phospho-alpha-D-ribose 1-diphosphate. It participates in purine metabolism; XMP biosynthesis via salvage pathway; XMP from xanthine: step 1/1. Its function is as follows. Converts the preformed base xanthine, a product of nucleic acid breakdown, to xanthosine 5'-monophosphate (XMP), so it can be reused for RNA or DNA synthesis. This chain is Xanthine phosphoribosyltransferase, found in Heliobacterium modesticaldum (strain ATCC 51547 / Ice1).